The sequence spans 538 residues: Bifunctional purine biosynthesis protein PurH (538 aa).

The MGS-like domain maps to 8 to 158 (IPAPDKVEIK…KNHAYVTILT (151 aa)).

This sequence belongs to the PurH family.

The catalysed reaction is (6R)-10-formyltetrahydrofolate + 5-amino-1-(5-phospho-beta-D-ribosyl)imidazole-4-carboxamide = 5-formamido-1-(5-phospho-D-ribosyl)imidazole-4-carboxamide + (6S)-5,6,7,8-tetrahydrofolate. The enzyme catalyses IMP + H2O = 5-formamido-1-(5-phospho-D-ribosyl)imidazole-4-carboxamide. The protein operates within purine metabolism; IMP biosynthesis via de novo pathway; 5-formamido-1-(5-phospho-D-ribosyl)imidazole-4-carboxamide from 5-amino-1-(5-phospho-D-ribosyl)imidazole-4-carboxamide (10-formyl THF route): step 1/1. It functions in the pathway purine metabolism; IMP biosynthesis via de novo pathway; IMP from 5-formamido-1-(5-phospho-D-ribosyl)imidazole-4-carboxamide: step 1/1. The protein is Bifunctional purine biosynthesis protein PurH of Rhizobium etli (strain ATCC 51251 / DSM 11541 / JCM 21823 / NBRC 15573 / CFN 42).